A 423-amino-acid polypeptide reads, in one-letter code: Myb-like protein G (423 aa).

An HTH myb-type domain is found at 36–90 (TISKQRENWTDEEHQKFLEALTLFDRDWKKIESFVGSKTVIQIRSHAQKYFIKVQ). Positions 63 to 86 (WKKIESFVGSKTVIQIRSHAQKYF) form a DNA-binding region, H-T-H motif. Disordered stretches follow at residues 93-116 (NTGE…QKQK), 177-205 (QQAV…GTTL), and 284-372 (ISPR…LGNY). Low complexity predominate over residues 177–202 (QQAVTTAQSSQRNGGLPPNPSSNNGG). Over residues 286 to 295 (PRNSTGNINV) the composition is skewed to polar residues. The span at 302–354 (NNSNNNNNNNNNNNNNNNNNNNNNNNNNNNNNNNNNNNNNNNNNNNNNNNNNN) shows a compositional bias: low complexity. Residues 361-372 (QNHSNMVNLGNY) are compositionally biased toward polar residues.

The protein localises to the nucleus. This chain is Myb-like protein G (mybG), found in Dictyostelium discoideum (Social amoeba).